A 199-amino-acid polypeptide reads, in one-letter code: NAD(P)H dehydrogenase (quinone) (199 aa).

In terms of domain architecture, Flavodoxin-like spans 4-190; that stretch reads VLVLYYSAYG…GGARYQGKVI (187 aa). Residues 10-15 and 78-80 each bind FMN; these read SAYGHI and TRF. Residue Tyr-12 participates in NAD(+) binding. Trp-98 lines the substrate pocket. FMN is bound by residues 113–119 and His-134; that span reads STASQHG.

It belongs to the WrbA family. It depends on FMN as a cofactor.

It catalyses the reaction a quinone + NADH + H(+) = a quinol + NAD(+). The catalysed reaction is a quinone + NADPH + H(+) = a quinol + NADP(+). The polypeptide is NAD(P)H dehydrogenase (quinone) (Rhodopseudomonas palustris (strain BisB18)).